The sequence spans 227 residues: Zeamatin (227 aa).

A signal peptide spans 1 to 20 (MAGSVAIVGIFVALLAVAGE). Intrachain disulfides connect C30–C226, C72–C82, C87–C93, C139–C215, C145–C198, C153–C163, C167–C176, and C177–C185.

Belongs to the thaumatin family.

Its function is as follows. Has antifungal activity. Inhibits Candida albicans and Trichoderma reesei; marginal inhibition observed against Alternaria solani and Neurospora crassa. In Zea mays (Maize), this protein is Zeamatin (Zlp).